Consider the following 553-residue polypeptide: Arginine--tRNA ligase (553 aa).

Positions 130 to 140 (ANPTGDLHIGH) match the 'HIGH' region motif.

This sequence belongs to the class-I aminoacyl-tRNA synthetase family. As to quaternary structure, monomer.

Its subcellular location is the cytoplasm. The catalysed reaction is tRNA(Arg) + L-arginine + ATP = L-arginyl-tRNA(Arg) + AMP + diphosphate. This is Arginine--tRNA ligase from Staphylococcus aureus (strain USA300 / TCH1516).